Here is a 146-residue protein sequence, read N- to C-terminus: Hemoglobin cathodic subunit beta (146 aa).

Positions 2–146 (EWSSSERSTI…LIHALSRQYF (145 aa)) constitute a Globin domain. Heme b-binding residues include H63 and H92.

This sequence belongs to the globin family. Heterotetramer of two alpha chains and two beta chains. In terms of tissue distribution, red blood cells.

Functionally, involved in oxygen transport from gills to the various peripheral tissues. The chain is Hemoglobin cathodic subunit beta from Gymnothorax unicolor (Brown moray).